The following is a 365-amino-acid chain: Aminomethyltransferase (365 aa).

Belongs to the GcvT family. As to quaternary structure, the glycine cleavage system is composed of four proteins: P, T, L and H.

It carries out the reaction N(6)-[(R)-S(8)-aminomethyldihydrolipoyl]-L-lysyl-[protein] + (6S)-5,6,7,8-tetrahydrofolate = N(6)-[(R)-dihydrolipoyl]-L-lysyl-[protein] + (6R)-5,10-methylene-5,6,7,8-tetrahydrofolate + NH4(+). The glycine cleavage system catalyzes the degradation of glycine. The chain is Aminomethyltransferase from Aeromonas salmonicida (strain A449).